The primary structure comprises 362 residues: Very-long-chain (3R)-3-hydroxyacyl-CoA dehydratase 3 (362 aa).

The residue at position 1 (methionine 1) is an N-acetylmethionine. Over 1-149 the chain is Cytoplasmic; the sequence is MENQVLTPHV…ETLTSLKKGY (149 aa). The 90-residue stretch at 5–94 folds into the CS domain; sequence VLTPHVYWAQ…KESQWWERLT (90 aa). Residue threonine 7 is modified to Phosphothreonine. The stretch at 111-136 forms a coiled coil; sequence LDESDAEMELRAKEEEQLNKLRLESQ. A phosphoserine mark is found at serine 114 and serine 135. A helical membrane pass occupies residues 150–170; the sequence is LFMYNLVQFLGFSWIFVNMTV. At 171-189 the chain is on the lumenal side; it reads RFFILGKESFYDTFHTVAD. The chain crosses the membrane as a helical span at residues 190-210; the sequence is MMYFCQMLAAVESINAAIGVT. Residues 211-212 lie on the Cytoplasmic side of the membrane; that stretch reads KS. The chain crosses the membrane as a helical span at residues 213–233; the sequence is PVVPSLFQLLGRNFILFIIFG. Residues 234–242 are Lumenal-facing; sequence TMEEMQNKA. A helical membrane pass occupies residues 243–263; the sequence is VVFFVFYIWSTVEIFRYPFYM. At 264 to 280 the chain is on the cytoplasmic side; that stretch reads LSCIDMDWKVLTWLRYT. A helical transmembrane segment spans residues 281–301; it reads VWIPLYPMGCLAEAVSVIQSI. Active-site residues include tyrosine 286 and glutamate 293. Residues 302 to 325 are Lumenal-facing; it reads PVFNETGRFSFTLPYPVKIKVRFS. A helical membrane pass occupies residues 326–346; the sequence is FFLQIYLILLFLGLYVNFRYL. The Cytoplasmic portion of the chain corresponds to 347 to 362; sequence YKQRRRRFGQKKKKIH.

Belongs to the very long-chain fatty acids dehydratase HACD family. May interact with enzymes of the ELO family (including ELOVL1); with those enzymes that mediate condensation, the first of the four steps of the reaction cycle responsible for fatty acids elongation, may be part of a larger fatty acids elongase complex. Interacts with RAC1. Associates with internalized insulin receptor/INSR complexes on Golgi/endosomal membranes; HACD3/PTPLAD1 together with ATIC and PRKAA2/AMPK2 is proposed to be part of a signaling network regulating INSR autophosphorylation and endocytosis.

The protein localises to the endoplasmic reticulum membrane. It catalyses the reaction a very-long-chain (3R)-3-hydroxyacyl-CoA = a very-long-chain (2E)-enoyl-CoA + H2O. The enzyme catalyses (3R)-hydroxyhexadecanoyl-CoA = (2E)-hexadecenoyl-CoA + H2O. Its pathway is lipid metabolism; fatty acid biosynthesis. Its function is as follows. Catalyzes the third of the four reactions of the long-chain fatty acids elongation cycle. This endoplasmic reticulum-bound enzymatic process, allows the addition of two carbons to the chain of long- and very long-chain fatty acids/VLCFAs per cycle. This enzyme catalyzes the dehydration of the 3-hydroxyacyl-CoA intermediate into trans-2,3-enoyl-CoA, within each cycle of fatty acid elongation. Thereby, it participates in the production of VLCFAs of different chain lengths that are involved in multiple biological processes as precursors of membrane lipids and lipid mediators. Involved in Rac1-signaling pathways leading to the modulation of gene expression. Promotes insulin receptor/INSR autophosphorylation and is involved in INSR internalization. The polypeptide is Very-long-chain (3R)-3-hydroxyacyl-CoA dehydratase 3 (Bos taurus (Bovine)).